We begin with the raw amino-acid sequence, 227 residues long: Phosphoribosylformylglycinamidine synthase subunit PurQ (227 aa).

A Glutamine amidotransferase type-1 domain is found at 3 to 225 (FAVIVFPGSN…LKQWRETYVV (223 aa)). Cys-86 (nucleophile) is an active-site residue. Active-site residues include His-194 and Glu-196.

Part of the FGAM synthase complex composed of 1 PurL, 1 PurQ and 2 PurS subunits.

Its subcellular location is the cytoplasm. It carries out the reaction N(2)-formyl-N(1)-(5-phospho-beta-D-ribosyl)glycinamide + L-glutamine + ATP + H2O = 2-formamido-N(1)-(5-O-phospho-beta-D-ribosyl)acetamidine + L-glutamate + ADP + phosphate + H(+). The enzyme catalyses L-glutamine + H2O = L-glutamate + NH4(+). It participates in purine metabolism; IMP biosynthesis via de novo pathway; 5-amino-1-(5-phospho-D-ribosyl)imidazole from N(2)-formyl-N(1)-(5-phospho-D-ribosyl)glycinamide: step 1/2. Part of the phosphoribosylformylglycinamidine synthase complex involved in the purines biosynthetic pathway. Catalyzes the ATP-dependent conversion of formylglycinamide ribonucleotide (FGAR) and glutamine to yield formylglycinamidine ribonucleotide (FGAM) and glutamate. The FGAM synthase complex is composed of three subunits. PurQ produces an ammonia molecule by converting glutamine to glutamate. PurL transfers the ammonia molecule to FGAR to form FGAM in an ATP-dependent manner. PurS interacts with PurQ and PurL and is thought to assist in the transfer of the ammonia molecule from PurQ to PurL. The chain is Phosphoribosylformylglycinamidine synthase subunit PurQ from Bacillus thuringiensis (strain Al Hakam).